A 274-amino-acid chain; its full sequence is Diaminopimelate epimerase (274 aa).

Asn11, Gln44, and Asn64 together coordinate substrate. Residue Cys73 is the Proton donor of the active site. Substrate is bound by residues 74 to 75 (GN), Asn157, Asn190, and 208 to 209 (ER). Cys217 serves as the catalytic Proton acceptor. 218–219 (GS) contributes to the substrate binding site.

Belongs to the diaminopimelate epimerase family. Homodimer.

The protein localises to the cytoplasm. It catalyses the reaction (2S,6S)-2,6-diaminopimelate = meso-2,6-diaminopimelate. Its pathway is amino-acid biosynthesis; L-lysine biosynthesis via DAP pathway; DL-2,6-diaminopimelate from LL-2,6-diaminopimelate: step 1/1. Its function is as follows. Catalyzes the stereoinversion of LL-2,6-diaminopimelate (L,L-DAP) to meso-diaminopimelate (meso-DAP), a precursor of L-lysine and an essential component of the bacterial peptidoglycan. The polypeptide is Diaminopimelate epimerase (Edwardsiella ictaluri (strain 93-146)).